The following is a 35-amino-acid chain: Toxin Ado1 (35 aa).

3 disulfides stabilise this stretch: Cys5–Cys20, Cys12–Cys25, and Cys19–Cys32.

Its subcellular location is the secreted. Binds reversibly and blocks P/Q-type voltage-gated calcium channels (Cav). The sequence is that of Toxin Ado1 from Agriosphodrus dohrni (Japanese assassin-bug).